The following is a 305-amino-acid chain: Protoheme IX farnesyltransferase (305 aa).

Transmembrane regions (helical) follow at residues 31–51 (VMSL…YSVH), 52–72 (PFIA…AGAI), 102–119 (ALSF…FMAL), 123–145 (LLAS…IWLK), 151–171 (NIVI…AAVS), 179–199 (IILF…LALF), 225–245 (ILIY…IGMN), 247–267 (FIYL…SGSL), and 284–304 (SIFY…ISLI).

The protein belongs to the UbiA prenyltransferase family. Protoheme IX farnesyltransferase subfamily.

The protein localises to the cell inner membrane. It carries out the reaction heme b + (2E,6E)-farnesyl diphosphate + H2O = Fe(II)-heme o + diphosphate. Its pathway is porphyrin-containing compound metabolism; heme O biosynthesis; heme O from protoheme: step 1/1. Its function is as follows. Converts heme B (protoheme IX) to heme O by substitution of the vinyl group on carbon 2 of heme B porphyrin ring with a hydroxyethyl farnesyl side group. The polypeptide is Protoheme IX farnesyltransferase (Rickettsia felis (strain ATCC VR-1525 / URRWXCal2) (Rickettsia azadi)).